Consider the following 687-residue polypeptide: Mitochondrial 15S rRNA processing factor ppr3 (687 aa).

The transit peptide at 1-49 (MLNKCSGSLTLLAVRRFCGPCRRLHYHKDNPNNINIAKNLLNNNIQARC) directs the protein to the mitochondrion. PPR repeat units follow at residues 262 to 296 (NGLV…SITP), 297 to 331 (SKDF…ATSI), 334 to 368 (SAET…PIDP), and 372 to 407 (TTFV…GLRP).

Belongs to the CCM1 family. In terms of assembly, binds to mitochondrial small subunit 15S rRNA.

The protein resides in the mitochondrion. Functionally, regulates mitochondrial small subunit maturation by controlling 15S rRNA 5'-end processing. Localizes to the 5' precursor of the 15S rRNA in a position that is subsequently occupied by mS47 in the mature yeast mtSSU. Uses structure and sequence-specific RNA recognition, binding to a single-stranded region of the precursor and specifically recognizing bases -6 to -1. The exchange of Ccm1 for mS47 is coupled to the irreversible removal of precursor rRNA that is accompanied by conformational changes of the mitoribosomal proteins uS5m and mS26. These conformational changes signal completion of 5'-end rRNA processing through protection of the mature 5'-end of the 15S rRNA and stabilization of mS47. The removal of the 5' precursor together with the dissociation of Ccm1 may be catalyzed by the 5'-3' exoribonuclease Pet127. Involved in the specific removal of group I introns in mitochondrial encoded transcripts. This chain is Mitochondrial 15S rRNA processing factor ppr3, found in Schizosaccharomyces pombe (strain 972 / ATCC 24843) (Fission yeast).